A 311-amino-acid polypeptide reads, in one-letter code: Mediator of RNA polymerase II transcription subunit 27 (311 aa).

Residue Ser-132 is modified to Phosphoserine. An N6-methyllysine modification is found at Lys-134.

The protein belongs to the Mediator complex subunit 27 family. As to quaternary structure, component of the Mediator complex, which is composed of MED1, MED4, MED6, MED7, MED8, MED9, MED10, MED11, MED12, MED13, MED13L, MED14, MED15, MED16, MED17, MED18, MED19, MED20, MED21, MED22, MED23, MED24, MED25, MED26, MED27, MED29, MED30, MED31, CCNC, CDK8 and CDC2L6/CDK11. The MED12, MED13, CCNC and CDK8 subunits form a distinct module termed the CDK8 module. Mediator containing the CDK8 module is less active than Mediator lacking this module in supporting transcriptional activation. Individual preparations of the Mediator complex lacking one or more distinct subunits have been variously termed ARC, CRSP, DRIP, PC2, SMCC and TRAP.

Its subcellular location is the nucleus. In terms of biological role, component of the Mediator complex, a coactivator involved in the regulated transcription of nearly all RNA polymerase II-dependent genes. Mediator functions as a bridge to convey information from gene-specific regulatory proteins to the basal RNA polymerase II transcription machinery. Mediator is recruited to promoters by direct interactions with regulatory proteins and serves as a scaffold for the assembly of a functional preinitiation complex with RNA polymerase II and the general transcription factors. This is Mediator of RNA polymerase II transcription subunit 27 (MED27) from Sus scrofa (Pig).